We begin with the raw amino-acid sequence, 39 residues long: Bacteriocin E50-52 (39 aa).

It is found in the secreted. Its function is as follows. Bacteriocin active against the Gram-negative bacteria C.jejuni, Y.enterocolitica and Y.pseudotuberculosis, and the Gram-positive bacteria S.aureus, S.epidermidis, L.monocytogenes and Listeria spp. When added to the drinking water of chickens, causes a decrease in the levels of C.jejuni and S.enteritidis in the ceca, and in the levels of S.enteritidis in the liver and spleen. The chain is Bacteriocin E50-52 from Enterococcus faecium (Streptococcus faecium).